The chain runs to 304 residues: Deoxyribonuclease-1-like 1 (304 aa).

Positions 1-24 are cleaved as a signal peptide; that stretch reads MPYMAMHGLTVALLLIFLAGGTEA. Asn92 carries an N-linked (GlcNAc...) asparagine glycan. Residue Glu103 is part of the active site. Asn123 is a glycosylation site (N-linked (GlcNAc...) asparagine). His154 is a catalytic residue. Cys193 and Cys230 are oxidised to a cystine. Asn229 is a glycosylation site (N-linked (GlcNAc...) asparagine).

The protein belongs to the DNase I family.

The protein localises to the endoplasmic reticulum. This chain is Deoxyribonuclease-1-like 1 (DNASE1L1), found in Cricetulus griseus (Chinese hamster).